A 215-amino-acid polypeptide reads, in one-letter code: Redox-sensing transcriptional repressor Rex (215 aa).

The H-T-H motif DNA-binding region spans 18–57 (LYYRFLKNLHASGKQRVSSAELSDAVKVDSATIRRDFSYF). 92 to 97 (GVGNLG) is a binding site for NAD(+).

It belongs to the transcriptional regulatory Rex family. In terms of assembly, homodimer.

The protein localises to the cytoplasm. In terms of biological role, modulates transcription in response to changes in cellular NADH/NAD(+) redox state. The polypeptide is Redox-sensing transcriptional repressor Rex (Bacillus velezensis (strain DSM 23117 / BGSC 10A6 / LMG 26770 / FZB42) (Bacillus amyloliquefaciens subsp. plantarum)).